Here is a 420-residue protein sequence, read N- to C-terminus: Gamma-glutamyl phosphate reductase (420 aa).

The protein belongs to the gamma-glutamyl phosphate reductase family.

It localises to the cytoplasm. The catalysed reaction is L-glutamate 5-semialdehyde + phosphate + NADP(+) = L-glutamyl 5-phosphate + NADPH + H(+). It functions in the pathway amino-acid biosynthesis; L-proline biosynthesis; L-glutamate 5-semialdehyde from L-glutamate: step 2/2. Functionally, catalyzes the NADPH-dependent reduction of L-glutamate 5-phosphate into L-glutamate 5-semialdehyde and phosphate. The product spontaneously undergoes cyclization to form 1-pyrroline-5-carboxylate. In Neisseria meningitidis serogroup C (strain 053442), this protein is Gamma-glutamyl phosphate reductase.